The sequence spans 138 residues: Venom allergen 2 (138 aa).

The signal sequence occupies residues 1 to 19 (MKSFVLATCLLGFAQIIYA).

This sequence belongs to the ant venom allergen 2/4 family. Homodimer; disulfide-linked. As to expression, expressed by the venom gland.

It localises to the secreted. In Solenopsis saevissima (Fire ant), this protein is Venom allergen 2.